The following is a 214-amino-acid chain: Large ribosomal subunit protein bL25 (214 aa).

Residues 178–214 (VEPEEEELPETDEEGEGAEGEAAEAAEGESAEGESEE) are disordered. Residues 179–214 (EPEEEELPETDEEGEGAEGEAAEAAEGESAEGESEE) are compositionally biased toward acidic residues.

This sequence belongs to the bacterial ribosomal protein bL25 family. CTC subfamily. As to quaternary structure, part of the 50S ribosomal subunit; part of the 5S rRNA/L5/L18/L25 subcomplex. Contacts the 5S rRNA. Binds to the 5S rRNA independently of L5 and L18.

Its function is as follows. This is one of the proteins that binds to the 5S RNA in the ribosome where it forms part of the central protuberance. In Corynebacterium jeikeium (strain K411), this protein is Large ribosomal subunit protein bL25.